The sequence spans 187 residues: MGVTLDSALNPHKPEGFGEVVAPDPDYFKALQAEVNDKGFLVTSAEELFQWARTGSLWWMTFGLACCAVEMIHVNMPRYDLERFGAAPRASPRQSDVMIVAGTLCNKMAPALRRVYDQMSEPKYVISMGSCANGGGYYHYSYSVVRGCDRIVPVDIYVPGCPPTAEALLYGIMQLQRKIRRIGTLER.

Residues cysteine 66, cysteine 67, cysteine 131, and cysteine 161 each coordinate [4Fe-4S] cluster.

It belongs to the complex I 20 kDa subunit family. NDH-1 is composed of 14 different subunits. Subunits NuoB, C, D, E, F, and G constitute the peripheral sector of the complex. [4Fe-4S] cluster serves as cofactor.

The protein resides in the cell inner membrane. The enzyme catalyses a quinone + NADH + 5 H(+)(in) = a quinol + NAD(+) + 4 H(+)(out). Its function is as follows. NDH-1 shuttles electrons from NADH, via FMN and iron-sulfur (Fe-S) centers, to quinones in the respiratory chain. Couples the redox reaction to proton translocation (for every two electrons transferred, four hydrogen ions are translocated across the cytoplasmic membrane), and thus conserves the redox energy in a proton gradient. This Rhizorhabdus wittichii (strain DSM 6014 / CCUG 31198 / JCM 15750 / NBRC 105917 / EY 4224 / RW1) (Sphingomonas wittichii) protein is NADH-quinone oxidoreductase subunit B.